We begin with the raw amino-acid sequence, 292 residues long: Pyruvate formate-lyase 2-activating enzyme (292 aa).

A Radical SAM core domain is found at 33 to 287 (NDGEGIRTVV…REMAERAGLQ (255 aa)). [4Fe-4S] cluster-binding residues include cysteine 47, cysteine 51, and cysteine 54. 53–55 (WCA) serves as a coordination point for S-adenosyl-L-methionine. The region spanning 62–96 (GKIQTVRREAKCLHCAKCLRDADECPSGAFERIGR) is the 4Fe-4S ferredoxin-type domain. S-adenosyl-L-methionine is bound by residues glycine 126, 175–177 (DLK), and histidine 247.

Belongs to the organic radical-activating enzymes family. The cofactor is [4Fe-4S] cluster.

It is found in the cytoplasm. The enzyme catalyses glycyl-[formate C-acetyltransferase] + reduced [flavodoxin] + S-adenosyl-L-methionine = glycin-2-yl radical-[formate C-acetyltransferase] + semiquinone [flavodoxin] + 5'-deoxyadenosine + L-methionine + H(+). Functionally, activation of pyruvate formate-lyase 2 under anaerobic conditions by generation of an organic free radical, using S-adenosylmethionine and reduced flavodoxin as cosubstrates to produce 5'-deoxy-adenosine. The sequence is that of Pyruvate formate-lyase 2-activating enzyme (pflC) from Escherichia coli (strain K12).